The chain runs to 191 residues: INO80 complex subunit C (191 aa).

The tract at residues 1-41 (MAAQIPIVAATSTPTVARNSKKRPASPSHNSSGGGYGASKK) is disordered.

Component of the chromatin remodeling INO80 complex; specifically part of a complex module associated with the helicase ATP-binding and the helicase C-terminal domain of INO80. Component of some MLL1/MLL complex, at least composed of the core components KMT2A/MLL1, ASH2L, HCFC1/HCF1, WDR5 and RBBP5, as well as the facultative components BACC1, CHD8, E2F6, HSP70, INO80C, KANSL1, LAS1L, MAX, MCRS1, MGA, MYST1/MOF, PELP1, PHF20, PRP31, RING2, RUVB1/TIP49A, RUVB2/TIP49B, SENP3, TAF1, TAF4, TAF6, TAF7, TAF9 and TEX10.

Its subcellular location is the nucleus. Its function is as follows. Proposed core component of the chromatin remodeling INO80 complex which is involved in transcriptional regulation, DNA replication and probably DNA repair. The protein is INO80 complex subunit C (Ino80c) of Rattus norvegicus (Rat).